The chain runs to 75 residues: ATP synthase subunit epsilon, mitochondrial (75 aa).

The N-terminal 9 residues, 1–9 (MIRRSCALL), are a transit peptide targeting the mitochondrion.

This sequence belongs to the eukaryotic ATPase epsilon family. F-type ATPases have 2 components, F(1) - the catalytic core - and F(o) - the membrane proton channel. F(1) has five subunits: alpha(3), beta(3), gamma(1), delta(1), epsilon(1), plus the additional subunit P18 (Tb427.05.1710) that is not present in F(1)F(o) ATP synthase from metazoa. Subunit P18 (Tb927.5.1710) interacts with the alpha subunit with a 1:1 stoichiometry; the interaction is direct. Subunit gamma is part of the central stalk. F(o) has three main subunits: a, b and c. The trypanosomal ATPase complex contains additional subunits that are not present in the F(1)F(o) ATP synthase from metazoa.

The protein resides in the mitochondrion. It localises to the mitochondrion inner membrane. Its function is as follows. Mitochondrial membrane ATP synthase (F(1)F(o) ATP synthase) produces ATP from ADP in the presence of a proton gradient across the membrane which is generated by electron transport complexes of the respiratory chain. F-type ATPases consist of two structural domains, F(1) - containing the extramembraneous catalytic core, and F(o) - containing the membrane proton channel, linked together by a central stalk and a peripheral stalk. During catalysis, ATP synthesis in the catalytic domain of F(1) is coupled via a rotary mechanism of the central stalk subunits to proton translocation. Subunits alpha and beta form the catalytic core in F(1). Rotation of the central stalk against the surrounding alpha(3)beta(3) subunits leads to hydrolysis of ATP in three separate catalytic sites on the beta subunits. Contrary to the procyclic, insect form that requires F(1)F(o) ATP synthase for ATP synthesis, the bloodstream form relies on ATP hydrolysis by F(1)F(o) ATP synthase to maintain its mitochondrial membrane potential. The chain is ATP synthase subunit epsilon, mitochondrial from Trypanosoma brucei brucei.